Here is an 87-residue protein sequence, read N- to C-terminus: Small ribosomal subunit protein bS20 (87 aa).

The interval 1 to 24 is disordered; sequence MANTAQARKRARQSVERNKHNSSL.

It belongs to the bacterial ribosomal protein bS20 family.

Its function is as follows. Binds directly to 16S ribosomal RNA. The protein is Small ribosomal subunit protein bS20 of Bordetella avium (strain 197N).